The primary structure comprises 704 residues: Elongation factor G 1 (704 aa).

The tr-type G domain maps to 8-291 (ERYRNIGISA…AVIDYLPSPA (284 aa)). GTP contacts are provided by residues 17 to 24 (AHIDAGKT), 88 to 92 (DTPGH), and 142 to 145 (NKMD).

The protein belongs to the TRAFAC class translation factor GTPase superfamily. Classic translation factor GTPase family. EF-G/EF-2 subfamily.

It is found in the cytoplasm. Its function is as follows. Catalyzes the GTP-dependent ribosomal translocation step during translation elongation. During this step, the ribosome changes from the pre-translocational (PRE) to the post-translocational (POST) state as the newly formed A-site-bound peptidyl-tRNA and P-site-bound deacylated tRNA move to the P and E sites, respectively. Catalyzes the coordinated movement of the two tRNA molecules, the mRNA and conformational changes in the ribosome. The chain is Elongation factor G 1 from Burkholderia pseudomallei (strain 1710b).